A 464-amino-acid polypeptide reads, in one-letter code: Siroheme synthase (464 aa).

The interval 1 to 203 (MEFLPLFHNL…GQGAEAERML (203 aa)) is precorrin-2 dehydrogenase /sirohydrochlorin ferrochelatase. Residues 22-23 (EI) and 43-44 (PE) each bind NAD(+). Phosphoserine is present on S128. Residues 216–464 (GEVYLVGAGP…AWFEGAQATL (249 aa)) are uroporphyrinogen-III C-methyltransferase. S-adenosyl-L-methionine is bound at residue P225. D248 acts as the Proton acceptor in catalysis. K270 functions as the Proton donor in the catalytic mechanism. Residues 301 to 303 (GGD), I306, 331 to 332 (TA), M383, and G412 contribute to the S-adenosyl-L-methionine site.

In the N-terminal section; belongs to the precorrin-2 dehydrogenase / sirohydrochlorin ferrochelatase family. This sequence in the C-terminal section; belongs to the precorrin methyltransferase family.

It carries out the reaction uroporphyrinogen III + 2 S-adenosyl-L-methionine = precorrin-2 + 2 S-adenosyl-L-homocysteine + H(+). It catalyses the reaction precorrin-2 + NAD(+) = sirohydrochlorin + NADH + 2 H(+). The catalysed reaction is siroheme + 2 H(+) = sirohydrochlorin + Fe(2+). The protein operates within cofactor biosynthesis; adenosylcobalamin biosynthesis; precorrin-2 from uroporphyrinogen III: step 1/1. Its pathway is cofactor biosynthesis; adenosylcobalamin biosynthesis; sirohydrochlorin from precorrin-2: step 1/1. It functions in the pathway porphyrin-containing compound metabolism; siroheme biosynthesis; precorrin-2 from uroporphyrinogen III: step 1/1. It participates in porphyrin-containing compound metabolism; siroheme biosynthesis; siroheme from sirohydrochlorin: step 1/1. The protein operates within porphyrin-containing compound metabolism; siroheme biosynthesis; sirohydrochlorin from precorrin-2: step 1/1. Its function is as follows. Multifunctional enzyme that catalyzes the SAM-dependent methylations of uroporphyrinogen III at position C-2 and C-7 to form precorrin-2 via precorrin-1. Then it catalyzes the NAD-dependent ring dehydrogenation of precorrin-2 to yield sirohydrochlorin. Finally, it catalyzes the ferrochelation of sirohydrochlorin to yield siroheme. This is Siroheme synthase from Pseudomonas syringae pv. syringae (strain B728a).